Reading from the N-terminus, the 188-residue chain is Probable manganese efflux pump MntP (188 aa).

The next 5 membrane-spanning stretches (helical) occupy residues 3-23 (ITAT…ASIG), 66-86 (LEWN…RMII), 106-128 (WLLV…GLAF), 143-163 (ATLI…SIIG), and 168-188 (ILGG…HFHG).

It belongs to the MntP (TC 9.B.29) family.

It localises to the cell inner membrane. Its function is as follows. Probably functions as a manganese efflux pump. The chain is Probable manganese efflux pump MntP from Escherichia coli O7:K1 (strain IAI39 / ExPEC).